Reading from the N-terminus, the 218-residue chain is Ribose-5-phosphate isomerase A (218 aa).

Substrate is bound by residues 28 to 31 (TGST), 81 to 84 (DGAD), and 94 to 97 (KGGG). Glu-103 acts as the Proton acceptor in catalysis. Lys-121 is a binding site for substrate.

Belongs to the ribose 5-phosphate isomerase family. As to quaternary structure, homodimer.

The enzyme catalyses aldehydo-D-ribose 5-phosphate = D-ribulose 5-phosphate. Its pathway is carbohydrate degradation; pentose phosphate pathway; D-ribose 5-phosphate from D-ribulose 5-phosphate (non-oxidative stage): step 1/1. Catalyzes the reversible conversion of ribose-5-phosphate to ribulose 5-phosphate. The protein is Ribose-5-phosphate isomerase A of Shewanella woodyi (strain ATCC 51908 / MS32).